Here is a 584-residue protein sequence, read N- to C-terminus: Arginine--tRNA ligase (584 aa).

The 'HIGH' region signature appears at 126 to 136 (PNIAKEMHVGH).

This sequence belongs to the class-I aminoacyl-tRNA synthetase family. As to quaternary structure, monomer.

The protein resides in the cytoplasm. The catalysed reaction is tRNA(Arg) + L-arginine + ATP = L-arginyl-tRNA(Arg) + AMP + diphosphate. The polypeptide is Arginine--tRNA ligase (Nostoc punctiforme (strain ATCC 29133 / PCC 73102)).